We begin with the raw amino-acid sequence, 123 residues long: Ribonuclease P protein component 2 (123 aa).

Belongs to the eukaryotic/archaeal RNase P protein component 2 family. In terms of assembly, consists of a catalytic RNA component and at least 4 protein subunits.

The enzyme catalyses Endonucleolytic cleavage of RNA, removing 5'-extranucleotides from tRNA precursor.. Its function is as follows. Part of ribonuclease P, a protein complex that generates mature tRNA molecules by cleaving their 5'-ends. This Aeropyrum pernix (strain ATCC 700893 / DSM 11879 / JCM 9820 / NBRC 100138 / K1) protein is Ribonuclease P protein component 2.